The sequence spans 1818 residues: Unconventional myosin-Vb (1818 aa).

Positions 8–60 (TRYTRVWIPDPDEVWRSAELTKDYKEGDKSLQLRLEDDTILEYPVDVQNNQVP) constitute a Myosin N-terminal SH3-like domain. The interval 21 to 40 (VWRSAELTKDYKEGDKSLQL) is requires for interaction with LIMA1. A Myosin motor domain is found at 69–762 (VGENDLTALS…QVAYLEKLRA (694 aa)). 163–170 (GESGAGKT) lines the ATP pocket. The actin-binding stretch occupies residues 641-663 (LNLLMETLNATTPHYVRCIKPND). 6 IQ domains span residues 765-794 (FREA…ATLS), 788-817 (LRAA…TRAA), 813-842 (RTRA…ATVI), 836-865 (VCRA…EHKA), 861-890 (MEHK…AAIV), and 884-913 (ERDA…EARS). Disordered stretches follow at residues 1086–1120 (LRDE…EIGD) and 1161–1188 (QAQL…VDQD). The span at 1098–1118 (PSNQSSLESDSNYPSISTSEI) shows a compositional bias: polar residues. Coiled-coil stretches lie at residues 1140–1261 (MTVF…LILR) and 1313–1415 (LEAQ…ALAQ). S1416 is subject to Phosphoserine. The Dilute domain maps to 1496 to 1773 (SSTINGIKKV…IRTIQAQLQE (278 aa)).

Belongs to the TRAFAC class myosin-kinesin ATPase superfamily. Myosin family. In terms of assembly, component of the CART complex, at least composed of ACTN4, HGS/HRS, MYO5B and TRIM3. Interacts with RAB11FIP2. Interacts with RAB11A and RAB8A. Found in a complex with CFTR and RAB11A. Interacts with NPC1L1. Interacts with LIMA1.

The protein resides in the cytoplasm. Functionally, may be involved in vesicular trafficking via its association with the CART complex. The CART complex is necessary for efficient transferrin receptor recycling but not for EGFR degradation. Required in a complex with RAB11A and RAB11FIP2 for the transport of NPC1L1 to the plasma membrane. Together with RAB11A participates in CFTR trafficking to the plasma membrane and TF (transferrin) recycling in nonpolarized cells. Together with RAB11A and RAB8A participates in epithelial cell polarization. Together with RAB25 regulates transcytosis. Required for proper localization of bile salt export pump ABCB11 at the apical/canalicular plasma membrane of hepatocytes. This is Unconventional myosin-Vb (Myo5b) from Mus musculus (Mouse).